The chain runs to 398 residues: Acetyl-CoA acetyltransferase (398 aa).

At S2 the chain carries N-acetylserine. Residue C91 is the Acyl-thioester intermediate of the active site. 2 residues coordinate CoA: Y186 and K231. Y186 provides a ligand contact to K(+). Residues A248, A249, and A251 each contribute to the K(+) site. S252 provides a ligand contact to CoA. A K(+)-binding site is contributed by V350. Catalysis depends on proton acceptor residues H354 and C384.

This sequence belongs to the thiolase-like superfamily. Thiolase family. Homotetramer.

Its subcellular location is the cytoplasm. It is found in the cytosol. The enzyme catalyses 2 acetyl-CoA = acetoacetyl-CoA + CoA. The protein operates within metabolic intermediate biosynthesis; (R)-mevalonate biosynthesis; (R)-mevalonate from acetyl-CoA: step 1/3. In terms of biological role, acetyl-CoA acetyltransferase; part of the first module of ergosterol biosynthesis pathway that includes the early steps of the pathway, conserved across all eukaryotes, and which results in the formation of mevalonate from acetyl-coenzyme A (acetyl-CoA). ERG10 catalyzes the formation of acetoacetyl-CoA from acetyl-CoA. The first module starts with the action of the cytosolic acetyl-CoA acetyltransferase ERG10 that catalyzes the formation of acetoacetyl-CoA. The hydroxymethylglutaryl-CoA synthase ERG13 then condenses acetyl-CoA with acetoacetyl-CoA to form HMG-CoA. The rate-limiting step of the early module is the reduction to mevalonate by the 3-hydroxy-3-methylglutaryl-coenzyme A (HMG-CoA) reductases HMG1 and HMG2 which are derived from a single ancestral HMGR gene by gene duplication. This is Acetyl-CoA acetyltransferase from Saccharomyces cerevisiae (strain ATCC 204508 / S288c) (Baker's yeast).